The primary structure comprises 340 residues: Ornithine carbamoyltransferase (340 aa).

Carbamoyl phosphate contacts are provided by residues 57-60, Q84, R108, and 135-138; these read STRT and HPTQ. L-ornithine contacts are provided by residues N167, D231, and 235-236; that span reads SM. Residues 272–273 and R317 each bind carbamoyl phosphate; that span reads CL.

This sequence belongs to the aspartate/ornithine carbamoyltransferase superfamily. OTCase family.

The protein localises to the cytoplasm. It carries out the reaction carbamoyl phosphate + L-ornithine = L-citrulline + phosphate + H(+). The protein operates within amino-acid biosynthesis; L-arginine biosynthesis; L-arginine from L-ornithine and carbamoyl phosphate: step 1/3. In terms of biological role, reversibly catalyzes the transfer of the carbamoyl group from carbamoyl phosphate (CP) to the N(epsilon) atom of ornithine (ORN) to produce L-citrulline. This chain is Ornithine carbamoyltransferase (argF), found in Lactiplantibacillus plantarum (strain ATCC BAA-793 / NCIMB 8826 / WCFS1) (Lactobacillus plantarum).